Here is a 52-residue protein sequence, read N- to C-terminus: Unknown protein from spot 415 of 2D-PAGE of etiolated coleoptile (52 aa).

The chain is Unknown protein from spot 415 of 2D-PAGE of etiolated coleoptile from Zea mays (Maize).